The chain runs to 394 residues: Na(+)/H(+) antiporter NhaA 2 (394 aa).

11 helical membrane passes run 13–33 (FGGVLLIIATILALLFQNGFL), 58–78 (LILWVNDGLMAIFFFVVGLEL), 93–113 (IALPTIGALGGVILPAVIFWA), 124–144 (GWAIPTATDIAFALGVLMLLG), 153–173 (IFLLTLAIIDDLCAIVIIAIF), 176–196 (TKLSFISFVIAGICLFALWVL), 208–228 (ILVTLILWVSVLKSGVHATIA), 260–280 (YFILPVFAFVNAGVSLAGVQI), 291–311 (IFFGLLIGKQVGVFLFSYIFI), 327–347 (FYGVCILTGIGFTMSLFVNSL), and 361–381 (LGILLASFTAGVIGYIYLLVF).

This sequence belongs to the NhaA Na(+)/H(+) (TC 2.A.33) antiporter family.

It localises to the cell inner membrane. The catalysed reaction is Na(+)(in) + 2 H(+)(out) = Na(+)(out) + 2 H(+)(in). Na(+)/H(+) antiporter that extrudes sodium in exchange for external protons. This is Na(+)/H(+) antiporter NhaA 2 from Campylobacter fetus subsp. fetus (strain 82-40).